Here is a 42-residue protein sequence, read N- to C-terminus: Cytochrome b6-f complex subunit 7 (42 aa).

A helical membrane pass occupies residues 15–35 (IVTAAVTCIFMVLFGLSLGFA).

The protein belongs to the PetM family. As to quaternary structure, the 4 large subunits of the cytochrome b6-f complex are cytochrome b6, subunit IV (17 kDa polypeptide, PetD), cytochrome f and the Rieske protein, while the 4 small subunits are PetG, PetL, PetM and PetN. The complex functions as a dimer.

The protein localises to the plastid. Its subcellular location is the chloroplast thylakoid membrane. Functionally, component of the cytochrome b6-f complex, which mediates electron transfer between photosystem II (PSII) and photosystem I (PSI), cyclic electron flow around PSI, and state transitions. This chain is Cytochrome b6-f complex subunit 7, found in Trieres chinensis (Marine centric diatom).